The sequence spans 110 residues: Nucleoid-associated protein KPN78578_04440 (110 aa).

It belongs to the YbaB/EbfC family. In terms of assembly, homodimer.

The protein localises to the cytoplasm. Its subcellular location is the nucleoid. In terms of biological role, binds to DNA and alters its conformation. May be involved in regulation of gene expression, nucleoid organization and DNA protection. The protein is Nucleoid-associated protein KPN78578_04440 of Klebsiella pneumoniae subsp. pneumoniae (strain ATCC 700721 / MGH 78578).